The primary structure comprises 1098 residues: Probable arabinosyltransferase B (1098 aa).

Helical transmembrane passes span 28 to 50, 217 to 239, 271 to 293, 402 to 419, 434 to 456, 472 to 494, 541 to 558, 570 to 587, 597 to 619, 626 to 648, 663 to 685, and 698 to 720; these read WVAT…LPVV, LKLL…LWRL, ASWR…WHVI, LRPE…YVLI, AVVT…AALV, LVGT…TVVF, FGFL…FIML, PAWR…FLMF, GLFA…PSVL, MAFL…GWWY, IDGI…YAAW, and LIRA…VFVA.

It belongs to the emb family.

Its subcellular location is the cell membrane. Functionally, arabinosyl transferase responsible for the polymerization of arabinose into the arabinan of arabinogalactan. The protein is Probable arabinosyltransferase B (embB) of Mycobacterium tuberculosis (strain CDC 1551 / Oshkosh).